The following is a 274-amino-acid chain: 4-hydroxy-3-methylbut-2-enyl diphosphate reductase (274 aa).

Cys12 contributes to the [4Fe-4S] cluster binding site. Positions 36 and 70 each coordinate (2E)-4-hydroxy-3-methylbut-2-enyl diphosphate. The dimethylallyl diphosphate site is built by His36 and His70. The isopentenyl diphosphate site is built by His36 and His70. Residue Cys92 coordinates [4Fe-4S] cluster. His120 provides a ligand contact to (2E)-4-hydroxy-3-methylbut-2-enyl diphosphate. His120 lines the dimethylallyl diphosphate pocket. His120 is an isopentenyl diphosphate binding site. Glu122 serves as the catalytic Proton donor. Residue Thr158 coordinates (2E)-4-hydroxy-3-methylbut-2-enyl diphosphate. Residue Cys186 participates in [4Fe-4S] cluster binding. 4 residues coordinate (2E)-4-hydroxy-3-methylbut-2-enyl diphosphate: Ser214, Ser215, Asn216, and Ser258. Dimethylallyl diphosphate-binding residues include Ser214, Ser215, Asn216, and Ser258. Ser214, Ser215, Asn216, and Ser258 together coordinate isopentenyl diphosphate.

Belongs to the IspH family. It depends on [4Fe-4S] cluster as a cofactor.

It catalyses the reaction isopentenyl diphosphate + 2 oxidized [2Fe-2S]-[ferredoxin] + H2O = (2E)-4-hydroxy-3-methylbut-2-enyl diphosphate + 2 reduced [2Fe-2S]-[ferredoxin] + 2 H(+). The enzyme catalyses dimethylallyl diphosphate + 2 oxidized [2Fe-2S]-[ferredoxin] + H2O = (2E)-4-hydroxy-3-methylbut-2-enyl diphosphate + 2 reduced [2Fe-2S]-[ferredoxin] + 2 H(+). It functions in the pathway isoprenoid biosynthesis; dimethylallyl diphosphate biosynthesis; dimethylallyl diphosphate from (2E)-4-hydroxy-3-methylbutenyl diphosphate: step 1/1. It participates in isoprenoid biosynthesis; isopentenyl diphosphate biosynthesis via DXP pathway; isopentenyl diphosphate from 1-deoxy-D-xylulose 5-phosphate: step 6/6. Its function is as follows. Catalyzes the conversion of 1-hydroxy-2-methyl-2-(E)-butenyl 4-diphosphate (HMBPP) into a mixture of isopentenyl diphosphate (IPP) and dimethylallyl diphosphate (DMAPP). Acts in the terminal step of the DOXP/MEP pathway for isoprenoid precursor biosynthesis. The sequence is that of 4-hydroxy-3-methylbut-2-enyl diphosphate reductase from Campylobacter curvus (strain 525.92).